We begin with the raw amino-acid sequence, 65 residues long: Dybowskin-2CDYa (65 aa).

An N-terminal signal peptide occupies residues 1 to 22; the sequence is MFTLKKSLLLLFFIGVIKLSLC. Positions 23–47 are excised as a propeptide; sequence EEERNADDDERRDDPDEMDVEVENR. Over residues 26-43 the composition is skewed to acidic residues; that stretch reads RNADDDERRDDPDEMDVE. The disordered stretch occupies residues 26–65; sequence RNADDDERRDDPDEMDVEVENRSAVGRHGRRFGLRKHRKH. Residues 50–65 are compositionally biased toward basic residues; the sequence is VGRHGRRFGLRKHRKH.

The protein belongs to the frog skin active peptide (FSAP) family. Brevinin subfamily. As to expression, expressed by the skin glands.

The protein localises to the secreted. Functionally, antimicrobial peptide. Has activity against the Gram-positive bacterium S.aureus (MIC=6 uM) and the Gram-negative bacterium E.coli (MIC=3 uM). Lacks hemolytic activity against human erythrocytes. In Rana dybowskii (Dybovsky's frog), this protein is Dybowskin-2CDYa.